A 124-amino-acid chain; its full sequence is MNIIAIAVGAAIGANLRYSLSIWAAQRWGASFPYGTLIVNVIGSFAIGFVLVLATTRLSLSDTARLLIVTGLLGGFTTFSSLSFETYTLVTSGSWMAAGLYVLSSFGLGIAGVFLGAGVARVLP.

4 consecutive transmembrane segments (helical) span residues 3–23 (IIAI…LSIW), 34–54 (YGTL…LVLA), 66–86 (LLIV…SFET), and 100–120 (LYVL…AGVA). The Na(+) site is built by Gly-74 and Thr-77.

It belongs to the fluoride channel Fluc/FEX (TC 1.A.43) family.

The protein localises to the cell membrane. It carries out the reaction fluoride(in) = fluoride(out). Its activity is regulated as follows. Na(+) is not transported, but it plays an essential structural role and its presence is essential for fluoride channel function. Its function is as follows. Fluoride-specific ion channel. Important for reducing fluoride concentration in the cell, thus reducing its toxicity. The sequence is that of Fluoride-specific ion channel FluC from Roseiflexus sp. (strain RS-1).